We begin with the raw amino-acid sequence, 703 residues long: Polyribonucleotide nucleotidyltransferase (703 aa).

2 residues coordinate Mg(2+): aspartate 487 and aspartate 493. The KH domain maps to 554–613 (PKMETIKIDPDKIRDVIGKGGATIRSICEDTGASIDIDDNGTVRIYAESKLAADEAIYRI). An S1 motif domain is found at 623 to 691 (GKLYRGKVER…ARGRIKLSMK (69 aa)).

Belongs to the polyribonucleotide nucleotidyltransferase family. As to quaternary structure, component of the RNA degradosome, which is a multiprotein complex involved in RNA processing and mRNA degradation. Requires Mg(2+) as cofactor.

The protein resides in the cytoplasm. The enzyme catalyses RNA(n+1) + phosphate = RNA(n) + a ribonucleoside 5'-diphosphate. Functionally, involved in mRNA degradation. Catalyzes the phosphorolysis of single-stranded polyribonucleotides processively in the 3'- to 5'-direction. The polypeptide is Polyribonucleotide nucleotidyltransferase (Hahella chejuensis (strain KCTC 2396)).